Reading from the N-terminus, the 100-residue chain is Large ribosomal subunit protein uL23 (100 aa).

It belongs to the universal ribosomal protein uL23 family. In terms of assembly, part of the 50S ribosomal subunit. Contacts protein L29, and trigger factor when it is bound to the ribosome.

In terms of biological role, one of the early assembly proteins it binds 23S rRNA. One of the proteins that surrounds the polypeptide exit tunnel on the outside of the ribosome. Forms the main docking site for trigger factor binding to the ribosome. The sequence is that of Large ribosomal subunit protein uL23 from Synechococcus sp. (strain CC9902).